A 375-amino-acid chain; its full sequence is Succinyl-diaminopimelate desuccinylase (375 aa).

Histidine 66 contributes to the Zn(2+) binding site. Residue aspartate 68 is part of the active site. Aspartate 99 contributes to the Zn(2+) binding site. The active-site Proton acceptor is the glutamate 133. Zn(2+) is bound by residues glutamate 134, glutamate 162, and histidine 348.

The protein belongs to the peptidase M20A family. DapE subfamily. In terms of assembly, homodimer. Zn(2+) is required as a cofactor. The cofactor is Co(2+).

It catalyses the reaction N-succinyl-(2S,6S)-2,6-diaminopimelate + H2O = (2S,6S)-2,6-diaminopimelate + succinate. It participates in amino-acid biosynthesis; L-lysine biosynthesis via DAP pathway; LL-2,6-diaminopimelate from (S)-tetrahydrodipicolinate (succinylase route): step 3/3. In terms of biological role, catalyzes the hydrolysis of N-succinyl-L,L-diaminopimelic acid (SDAP), forming succinate and LL-2,6-diaminopimelate (DAP), an intermediate involved in the bacterial biosynthesis of lysine and meso-diaminopimelic acid, an essential component of bacterial cell walls. The sequence is that of Succinyl-diaminopimelate desuccinylase from Stenotrophomonas maltophilia (strain K279a).